A 921-amino-acid chain; its full sequence is uncharacterized protein (921 aa).

A kinase-like region spans residues 334 to 628 (MTKRKFLSID…NLKSIYYDFF (295 aa)). The segment covering 401–494 (GSSEWSFGSS…NNNNSDGSSG (94 aa)) has biased composition (low complexity). Disordered regions lie at residues 401 to 499 (GSSE…DNRN) and 664 to 711 (NLYS…NSNS).

This is an uncharacterized protein from Dictyostelium discoideum (Social amoeba).